The following is a 527-amino-acid chain: Splicing factor MUD2 (527 aa).

Residues 36–169 (DNAVIDTHFK…SKFNGDRDKR (134 aa)) are disordered. Basic and acidic residues predominate over residues 42-55 (THFKRQKSDGELPK). Serine 49 is subject to Phosphoserine. The span at 60–85 (RNVSHSNNRGPSSIITMSTNRTTYEQ) shows a compositional bias: polar residues. Residues 94–109 (SYRDASGRSYNRENRY) show a composition bias toward basic and acidic residues. Over residues 110 to 122 (SSHNTGPQWNNNP) the composition is skewed to polar residues. Basic and acidic residues-rich tracts occupy residues 125-141 (RQRD…DRRG) and 155-169 (RKNE…RDKR). The 88-residue stretch at 424–511 (LLLLNCLDPL…QFNDRTVLCT (88 aa)) folds into the RRM domain.

MSL5, MUD2 and PRP40 interact to form the commitment complex 2 (CC2), a precursor of mature spliceosomes.

Splicing factor that contacts pre-mRNA directly and is a component of the pre-mRNA-U1 snRNP complex (commitment complex 2) that forms during early spliceosome assembly in yeast extracts. The sequence is that of Splicing factor MUD2 (MUD2) from Saccharomyces cerevisiae (strain ATCC 204508 / S288c) (Baker's yeast).